Here is a 380-residue protein sequence, read N- to C-terminus: Alpha-glucoside transport system permease protein AglG (380 aa).

The next 6 helical transmembrane spans lie at Val13–Ile33, Val179–Gly199, Val202–Leu222, Thr239–Leu259, Ile288–Thr308, and Glu344–Leu364. In terms of domain architecture, ABC transmembrane type-1 spans Phe167 to Leu364.

The protein belongs to the binding-protein-dependent transport system permease family. MalFG subfamily.

It localises to the cell inner membrane. In terms of biological role, part of the binding-protein-dependent transport system for alpha-glucosides such as sucrose, maltose and trehalose. Probably responsible for the translocation of the substrate across the membrane. This Rhizobium meliloti (strain 1021) (Ensifer meliloti) protein is Alpha-glucoside transport system permease protein AglG (aglG).